Here is a 148-residue protein sequence, read N- to C-terminus: Snaclec B4 (148 aa).

The N-terminal stretch at 1–24 (MGRIIFVSFGLLVVFLSLSGTGAA) is a signal peptide. Cystine bridges form between C27-C38, C55-C144, and C121-C136. The 112-residue stretch at 34–145 (YDQHCYKVFD…CRLLGHFVCK (112 aa)) folds into the C-type lectin domain.

This sequence belongs to the snaclec family. In terms of assembly, heterodimer; disulfide-linked. Expressed by the venom gland.

It is found in the secreted. Interferes with one step of hemostasis (modulation of platelet aggregation, or coagulation cascade, for example). This chain is Snaclec B4, found in Macrovipera lebetinus (Levantine viper).